A 536-amino-acid polypeptide reads, in one-letter code: Keratin, type II cytoskeletal 4 (536 aa).

The head stretch occupies residues 1 to 145 (MISRQSSVRG…DPEIQKIRTA (145 aa)). R13 is modified (omega-N-methylarginine). A coil 1A region spans residues 146–181 (EREQIKTLNNKFASFIDKVRFLEQQNKVLETKWNLL). The 312-residue stretch at 146–457 (EREQIKTLNN…KLLEGEECRM (312 aa)) folds into the IF rod domain. The interval 182–200 (QQQTTTTSPRNLDPFFETY) is linker 1. The tract at residues 201–293 (INALRKNLDT…LYEAELSQMQ (93 aa)) is coil 1B. A linker 12 region spans residues 294-316 (THVSDTSVVLSMDNNRNLDLDGI). Residues 317–454 (IAEVRAQYEE…TYRKLLEGEE (138 aa)) are coil 2. A tail region spans residues 455–524 (CRMSGECKSA…TSSATITKRS (70 aa)). Residues 515 to 536 (TSSATITKRSPRTRQDPDGLQP) form a disordered region. Residues 527–536 (TRQDPDGLQP) are compositionally biased toward basic and acidic residues.

Belongs to the intermediate filament family. As to quaternary structure, heterotetramer of two type I and two type II keratins. keratin-4 is generally associated with keratin-13.

The sequence is that of Keratin, type II cytoskeletal 4 from Rattus norvegicus (Rat).